A 410-amino-acid chain; its full sequence is Sensor histidine kinase GlnK (410 aa).

The Extracellular segment spans residues 1–15 (MLITVPLAGELKFYP). A helical transmembrane segment spans residues 16-36 (LNEEFRVSFGAPVFFFFLSLL). Over 37 to 38 (RH) the chain is Cytoplasmic. Residues 39–59 (VPAVLPGFLTGAAVFIFRVFL) form a helical membrane-spanning segment. Residues 60–71 (ELWGGGHNGLTP) are Extracellular-facing. Residues 72–92 (ILYDQASGFFFYMTYACLFSI) form a helical membrane-spanning segment. Topologically, residues 93–102 (LKANRFRERP) are cytoplasmic. A helical transmembrane segment spans residues 103–123 (IMLGFIGFMIEVVSDCVELTV). Residues 124 to 139 (QFLIFHTVVTPEKITD) are Extracellular-facing. A helical membrane pass occupies residues 140-160 (IAVIAISHTFIVMSFYSVLKL). Over 161-410 (YETQSREKQT…LPVRHLIQKG (250 aa)) the chain is Cytoplasmic. The Histidine kinase domain maps to 189-405 (VHLKKTLKTT…VFAIRLPVRH (217 aa)). Histidine 190 is modified (phosphohistidine; by autocatalysis).

As to quaternary structure, homotrimer. Under poor nitrogen source such as nitrate, the complex between GlnK and AmtB, which are the transmembrane ammonium transporter and its cognate regulator, respectively, interacts with TnrA. GlnK-ATP complex are not able to bind TnrA.

The protein resides in the cell membrane. The catalysed reaction is ATP + protein L-histidine = ADP + protein N-phospho-L-histidine.. Functionally, member of the two-component regulatory system GlnK/GlnL that positively regulates the expression of the glsA-glnT operon in response to glutamine. It seems that autophosphorylated GlnK transfers a phosphoryl group to GlnL, which positively regulates the expression of the glsA-glnT operon. Interaction between GlnK-AmtB complex and TnrA protects TnrA from proteolytic degradation. In Bacillus subtilis (strain 168), this protein is Sensor histidine kinase GlnK.